The primary structure comprises 280 residues: F420-dependent methylenetetrahydromethanopterin dehydrogenase (280 aa).

This sequence belongs to the MTD family.

It carries out the reaction 5,10-methylenetetrahydromethanopterin + oxidized coenzyme F420-(gamma-L-Glu)(n) + 2 H(+) = 5,10-methenyl-5,6,7,8-tetrahydromethanopterin + reduced coenzyme F420-(gamma-L-Glu)(n). The protein operates within one-carbon metabolism; methanogenesis from CO(2); 5,10-methylene-5,6,7,8-tetrahydromethanopterin from 5,10-methenyl-5,6,7,8-tetrahydromethanopterin (coenzyme F420 route): step 1/1. Its function is as follows. Catalyzes the reversible reduction of methenyl-H(4)MPT(+) to methylene-H(4)MPT. The protein is F420-dependent methylenetetrahydromethanopterin dehydrogenase of Methanocorpusculum labreanum (strain ATCC 43576 / DSM 4855 / Z).